The primary structure comprises 278 residues: Large ribosomal subunit protein uL2 (278 aa).

Disordered stretches follow at residues 26-57 (RSTPEKSLVRPLHSKGGRNNAGRVTVRHQGGG) and 225-278 (VMNP…NKKR). Residues 258-278 (RSPKKASNKYIVRRRKTNKKR) show a composition bias toward basic residues.

This sequence belongs to the universal ribosomal protein uL2 family. Part of the 50S ribosomal subunit. Forms a bridge to the 30S subunit in the 70S ribosome.

In terms of biological role, one of the primary rRNA binding proteins. Required for association of the 30S and 50S subunits to form the 70S ribosome, for tRNA binding and peptide bond formation. It has been suggested to have peptidyltransferase activity; this is somewhat controversial. Makes several contacts with the 16S rRNA in the 70S ribosome. This chain is Large ribosomal subunit protein uL2, found in Streptomyces coelicolor (strain ATCC BAA-471 / A3(2) / M145).